Reading from the N-terminus, the 139-residue chain is MRKPTETAGPSQRQQRVAELVRHAIAEVLSRGDLQDPVLSRHVITVPEVRMSPDLKLATAYVMPLGGQDEAPVLEALERNRKALRQEVARRVNLKFAPELRFRRDETFDEAARIDRLLRSEKVQRDLGGEQDDAGDPDA.

The protein belongs to the RbfA family. In terms of assembly, monomer. Binds 30S ribosomal subunits, but not 50S ribosomal subunits or 70S ribosomes.

The protein resides in the cytoplasm. In terms of biological role, one of several proteins that assist in the late maturation steps of the functional core of the 30S ribosomal subunit. Associates with free 30S ribosomal subunits (but not with 30S subunits that are part of 70S ribosomes or polysomes). Required for efficient processing of 16S rRNA. May interact with the 5'-terminal helix region of 16S rRNA. The protein is Ribosome-binding factor A of Methylobacterium sp. (strain 4-46).